The sequence spans 542 residues: GATA-type transcription factor sreA (542 aa).

A compositionally biased stretch (polar residues) spans 1–10 (MLTLRSSSDT). Residues 1 to 172 (MLTLRSSSDT…SAQNASGCGS (172 aa)) are disordered. Positions 44-63 (ADLRPDSFDASRSPDGDKAS) are enriched in basic and acidic residues. Composition is skewed to low complexity over residues 75-117 (SSDQ…PKAS) and 148-168 (SSTS…QNAS). Residues 178-196 (CPGGGSCNGTGGAVGCDGC) are cystein-rich region (CRR). The segment covering 210 to 223 (APSARQARASPSAQ) has biased composition (low complexity). A disordered region spans residues 210-248 (APSARQARASPSAQTSEEQAQSGLDALDSASQDASGMPK). Residues 250–274 (CQNCGTTLTPLWRRDDQGNTICNAC) form a GATA-type zinc finger. The segment covering 289 to 300 (MKKTVIKRRKRV) has biased composition (basic residues). Disordered regions lie at residues 289 to 408 (MKKT…PATR) and 461 to 525 (SNAP…REAE). 2 stretches are compositionally biased toward polar residues: residues 311-320 (AGSSDNSSVS) and 369-387 (KPTQ…NHSP). A compositionally biased stretch (low complexity) spans 396–407 (ESTSAESAPPAT). A compositionally biased stretch (polar residues) spans 464 to 483 (PARSQTQTQPQPGTRSYSPN). A coiled-coil region spans residues 510-542 (DKVKAARRAQLQREAENMREALRAKERELASLK).

The protein localises to the nucleus. In terms of biological role, GATA-type transcription repressor that regulates iron acquisition genes through specific binding the GATA sequence elements of target promoters. SreA targets include genes encoding a number of key iron-regulated factors such as the siderophore biosynthesis genes. Is dispensable for growth on keratin substrates. SreA represses the expression of hapX and the siderophore system during iron sufficient conditions by an iron-sensing mechanism, while hapX represses sreA and activates the siderophore system during iron-limiting conditions resulting in efficient iron uptake and inhibition of iron-consuming pathways. This Arthroderma benhamiae (strain ATCC MYA-4681 / CBS 112371) (Trichophyton mentagrophytes) protein is GATA-type transcription factor sreA.